The sequence spans 812 residues: Fibrous sheath CABYR-binding protein (812 aa).

The tract at residues 1-66 (MEESDEPEQP…SIGNIPGGKA (66 aa)) is disordered. Phosphoserine is present on residues Ser-25, Ser-57, Ser-125, Ser-133, Ser-184, and Ser-273. Disordered stretches follow at residues 269-333 (IQAP…PKGT), 367-388 (DSGRAESTTVEEATGEVQPPLS), 424-547 (FEDQ…PPSL), and 672-741 (PAEE…PSVK). The span at 275–286 (AKETSAAETTAK) shows a compositional bias: low complexity. Pro residues predominate over residues 488-501 (EVPPLPTEEWPLPP). Over residues 502-513 (VTEESPAEVTPP) the composition is skewed to low complexity. A compositionally biased stretch (acidic residues) spans 514-528 (ETEEGPIEPAEEGPE).

In terms of assembly, interacts with CABYR.

The protein resides in the cell projection. Its subcellular location is the cilium. It localises to the flagellum. May be involved in the later stages of fibrous sheath biogenesis. Binds calcium. The polypeptide is Fibrous sheath CABYR-binding protein (Rattus norvegicus (Rat)).